A 133-amino-acid polypeptide reads, in one-letter code: MSLTLRVLAPDQSVFDGTAEEVILPSTTGLIGILPGHISLVTALDIGVMRVRTNGAWNSIALMGGFAEVEADDVTVLVNGAELGDSIDATTAEAELEQAKAKVSQMEGQEPSTEKIKAQQTFNRARARVQATK.

It belongs to the ATPase epsilon chain family. F-type ATPases have 2 components, CF(1) - the catalytic core - and CF(0) - the membrane proton channel. CF(1) has five subunits: alpha(3), beta(3), gamma(1), delta(1), epsilon(1). CF(0) has three main subunits: a, b and c.

The protein localises to the cellular thylakoid membrane. Functionally, produces ATP from ADP in the presence of a proton gradient across the membrane. The polypeptide is ATP synthase epsilon chain (Prochlorococcus marinus (strain MIT 9303)).